A 143-amino-acid polypeptide reads, in one-letter code: Large ribosomal subunit protein uL22c (143 aa).

It belongs to the universal ribosomal protein uL22 family. As to quaternary structure, part of the 50S ribosomal subunit.

The protein localises to the plastid. Its subcellular location is the chloroplast. This protein binds specifically to 23S rRNA. Its function is as follows. The globular domain of the protein is located near the polypeptide exit tunnel on the outside of the subunit, while an extended beta-hairpin is found that lines the wall of the exit tunnel in the center of the 70S ribosome. This Piper cenocladum (Ant piper) protein is Large ribosomal subunit protein uL22c (rpl22).